The following is a 273-amino-acid chain: Histidine racemase (273 aa).

Cys-72 serves as the catalytic Proton acceptor. The active-site Proton donor is Cys-211.

Belongs to the histidine racemase family. In terms of assembly, homodimer.

It localises to the cytoplasm. It catalyses the reaction L-histidine = D-histidine. Its function is as follows. Isomerase that catalyzes the conversion of L-histidine to D-histidine. Functions the biosynthesis of the metallophore staphylopine, which is involved in the acquisition of nickel, cobalt, zinc, copper, and iron, and thus enables bacterial growth inside the host, where metal access is limited. Therefore, this enzyme probably contributes to staphylococcal virulence. The reaction is reversible in vitro, the enzyme can produce D-histidine from the L-stereoisomer and vice versa. Appears to be specific for histidine as it cannot use other amino acids as substrate, including L-alanine and L-methionine. This is Histidine racemase from Staphylococcus aureus (strain Mu50 / ATCC 700699).